A 305-amino-acid polypeptide reads, in one-letter code: Aurasperone B biosynthesis cluster protein A (305 aa).

The signal sequence occupies residues 1-26; the sequence is MSIFFSIRFWPAAISAAILWLPQVLG. Residues Asn29, Asn34, Asn64, Asn83, Asn132, Asn183, Asn218, and Asn288 are each glycosylated (N-linked (GlcNAc...) asparagine).

Belongs to the bfoA family.

Its function is as follows. Part of the gene cluster that mediates the biosynthesis of aurasperone B, a dimeric gamma-naphthopyrone. The first step in the biosynthesis of aurasperone B is the production of gamma-naphthopyrone precursor YWA1 by the non-reducing polyketide synthase albA, via condensation of one acetyl-CoA starter unit with 6 malonyl-CoA units. YWA1 is then methylated by aunE at position C-6 to yield foncesin which is further methylated at position C-8 by aunD to produce fonsecin B. A key enzyme in the biosynthetic pathway is the cytochrome P450 monooxygenase aunB which catalyzes the oxidative dimerization of fonsecin B to aurasperone B. AunB also catalyzes the oxidative dimerization of rubrofusarin B into aurasperone A. The polypeptide is Aurasperone B biosynthesis cluster protein A (Aspergillus niger (strain ATCC MYA-4892 / CBS 513.88 / FGSC A1513)).